The primary structure comprises 785 residues: Protein SEY1 (785 aa).

Residues 1–31 form a disordered region; it reads MASAAPINLRAQDTPYVPPTSLPTSSSQTGS. Topologically, residues 1–689 are cytoplasmic; that stretch reads MASAAPINLR…KRSTVASIAQ (689 aa). Residues 22–31 show a composition bias toward low complexity; that stretch reads LPTSSSQTGS. Positions 61 to 281 constitute a GB1/RHD3-type G domain; it reads GFSYNIVAVF…SSDYLFKPAY (221 aa). 71-78 lines the GTP pocket; that stretch reads GSQSTGKS. The stretch at 458–482 forms a coiled coil; that stretch reads SWEEELELLRDEIRAVADQCRKDET. Residues 690 to 710 form a helical membrane-spanning segment; the sequence is IPYWIYGVLVVLGWNEAMLVL. The Lumenal portion of the chain corresponds to 711-713; the sequence is FNP. A helical membrane pass occupies residues 714–734; it reads LYFAFLLLAMATSYIIAQLGL. Residues 735-785 are Cytoplasmic-facing; sequence VGPLFQVTRTVGSEIQRQATARLREHFSQPVLAEPVQVGPSRDREEVGQIQ.

It belongs to the TRAFAC class dynamin-like GTPase superfamily. GB1/RHD3 GTPase family. RHD3 subfamily.

The protein localises to the endoplasmic reticulum membrane. Its function is as follows. Cooperates with the reticulon proteins and tubule-shaping DP1 family proteins to generate and maintain the structure of the tubular endoplasmic reticulum network. Has GTPase activity, which is required for its function in ER organization. The polypeptide is Protein SEY1 (Laccaria bicolor (strain S238N-H82 / ATCC MYA-4686) (Bicoloured deceiver)).